The chain runs to 72 residues: MAKEDNIEMQGTVLETLPNTMFRVELENGHMVTAHISGKMRKNYIRILTGDKVTVELTPYDLSKGRIVFRSR.

The 72-residue stretch at M1–R72 folds into the S1-like domain.

It belongs to the IF-1 family. Component of the 30S ribosomal translation pre-initiation complex which assembles on the 30S ribosome in the order IF-2 and IF-3, IF-1 and N-formylmethionyl-tRNA(fMet); mRNA recruitment can occur at any time during PIC assembly.

The protein resides in the cytoplasm. One of the essential components for the initiation of protein synthesis. Stabilizes the binding of IF-2 and IF-3 on the 30S subunit to which N-formylmethionyl-tRNA(fMet) subsequently binds. Helps modulate mRNA selection, yielding the 30S pre-initiation complex (PIC). Upon addition of the 50S ribosomal subunit IF-1, IF-2 and IF-3 are released leaving the mature 70S translation initiation complex. This chain is Translation initiation factor IF-1, found in Salmonella paratyphi A (strain ATCC 9150 / SARB42).